Consider the following 870-residue polypeptide: MLGGIIGGLTGNKNARLKGSLVLMRKNALDINDFGATVIDGISEFLGRGVTCQLVSSSLVDPNNGNRGRVGTEASLEQWLTSLPSLTTGESKFGVTFEWEVEKMGIPGAIIVKNNHAAEFFLKTITLDNVPGHGAVVFVANSWIYPASKYRYNRVFFSNDTSLPSKMPAALKPYRDDELRNLRGDDQQGPYQEHDRVYRYDVYNDLGEPDSGNPRPVLGGSPDRPYPRRGRTGRKPTKTDPTAESRLSLLENIYVPRDERFGHLKMADFLGYSIKALVDGIVPAIRTYVDLTPGEFDSFKDILKLYEGGLKLPSIPALEELRKRFPLQLVKDLIPAGGDYLLKLPMPHVIREDKKAWMTDDEFAREILAGVNPMVIARLTEFPPRSRLDPARYGDQTSTITAAHVERGLEGLTVQQAIDGNLLYVVDHHDHFMPYLLDINSLDDNFIYATRTLLFLRGDGTLAPLAIELSLPHLQDDGLITARSTVYTPAARGGTGAGAVEWWVWQLAKAYVNVNDYCWHQLISHWLNTHAVMEPFVIATNRQLSVAHPVHKLLLPHYRDTMTINALARQTLINGGGIFEMTVFPRKHALAMSSAFYKDWSFADQALPDDLVKRGVAVPDPASPYKVRLLIEDYPYANDGLAVWHAIEQWATEYLAIYYPNDGVLQGDAELQAWWKEVREVGHGDIKDATWWPEMKTVAELVKACATIIWIGSALHAAVNFGQYPYAGYLPNRPSVSRRPMPEPGTKEYDELARDPEKVFVRTITKQMQAIVGISLLEILSKHSSDEVYLGQRDTPEWTSDAKALEAFKRFGARLTEIESRVVAMNKDPHRKNRVGPTNFPYTLLYPNTSDLKGDAAGLSARGIPNSISI.

Residues 32 to 158 (NDFGATVIDG…KYRYNRVFFS (127 aa)) form the PLAT domain. The region spanning 161-870 (TSLPSKMPAA…ARGIPNSISI (710 aa)) is the Lipoxygenase domain. A disordered region spans residues 203–243 (YNDLGEPDSGNPRPVLGGSPDRPYPRRGRTGRKPTKTDPTA). Over residues 227 to 236 (PRRGRTGRKP) the composition is skewed to basic residues. Residues histidine 525, histidine 530, histidine 716, asparagine 720, and isoleucine 870 each contribute to the Fe cation site.

Belongs to the lipoxygenase family. Monomer. Fe cation is required as a cofactor.

It is found in the cytoplasm. The enzyme catalyses (9Z,12Z)-octadecadienoate + O2 = (9S)-hydroperoxy-(10E,12Z)-octadecadienoate. The protein operates within lipid metabolism; oxylipin biosynthesis. Functionally, plant lipoxygenase may be involved in a number of diverse aspects of plant physiology including growth and development, pest resistance, and senescence or responses to wounding. Catalyzes the hydroperoxidation of lipids containing a cis,cis-1,4-pentadiene structure. In Oryza sativa subsp. japonica (Rice), this protein is Linoleate 9S-lipoxygenase 2 (LOX1.1).